We begin with the raw amino-acid sequence, 122 residues long: Large ribosomal subunit protein uL14 (122 aa).

Belongs to the universal ribosomal protein uL14 family. In terms of assembly, part of the 50S ribosomal subunit. Forms a cluster with proteins L3 and L19. In the 70S ribosome, L14 and L19 interact and together make contacts with the 16S rRNA in bridges B5 and B8.

In terms of biological role, binds to 23S rRNA. Forms part of two intersubunit bridges in the 70S ribosome. In Clostridium botulinum (strain 657 / Type Ba4), this protein is Large ribosomal subunit protein uL14.